Reading from the N-terminus, the 660-residue chain is Poly(A)-specific ribonuclease PARN (660 aa).

A divalent metal cation-binding residues include Asp28 and Glu30. The region spanning 177-243 (REFIRSVEEK…ERFIQISKVD (67 aa)) is the R3H domain. A divalent metal cation contacts are provided by Asp290 and Asp380. Phosphoserine is present on residues Ser560 and Ser614. The tract at residues 606–660 (ADEGGASVSPVAEEAELDEFSANQSQGKRSRKHKKRKSDASETTPPALFDVPQVW) is disordered. Residues 633 to 642 (KRSRKHKKRK) are compositionally biased toward basic residues. Position 643 is a phosphoserine (Ser643). Residue Thr649 is modified to Phosphothreonine.

This sequence belongs to the CAF1 family. It depends on a divalent metal cation as a cofactor.

The protein resides in the cytoplasm. It localises to the nucleus. The enzyme catalyses Exonucleolytic cleavage of poly(A) to 5'-AMP.. 3'-exoribonuclease that has a preference for poly(A) tails of mRNAs, thereby efficiently degrading poly(A) tails. Exonucleolytic degradation of the poly(A) tail is often the first step in the decay of eukaryotic mRNAs and is also used to silence certain maternal mRNAs translationally during oocyte maturation and early embryonic development. The chain is Poly(A)-specific ribonuclease PARN (parn) from Danio rerio (Zebrafish).